We begin with the raw amino-acid sequence, 502 residues long: Cytochrome P450 monooxygenase orf6 (502 aa).

A helical membrane pass occupies residues 3–25; the sequence is ALWVLAVALVAYFLCLSIYRLFL. N-linked (GlcNAc...) asparagine glycosylation is present at asparagine 382. Heme is bound at residue cysteine 445.

This sequence belongs to the cytochrome P450 family. It depends on heme as a cofactor.

It is found in the membrane. It participates in mycotoxin biosynthesis. Its function is as follows. Cytochrome P450 monooxygenase; part of the gene cluster that mediates the biosynthesis of brefeldin A (BFA), a protein transport inhibitor that shows antiviral, antifungal, and antitumor properties. The proposed biosynthesis of BFA involves formation of an acyclic polyketide chain that is differentially tailored throughout the backbone. The highly reducing polyketide synthase Bref-PKS is proposed to synthesize the precisely reduced octaketide precursor, which could then be directly offloaded by the thiohydrolase enzyme Bref-TH followed by a cytochrome P450 monooxygenase-mediated formation of the cyclopentane ring and macrocyclization to afford 7-deoxy BFA. Alternatively, the first ring annulation can also occur on the ACP-tethered intermediate before the thiohydrolase release and lactonization. The C7-hydroxylation by another cytochrome P450 monooxygenase is believed to be the final step in the process to obtain the final structure of BFA. In addition to the HRPKS Bref-PKS and the thiohydrolase Bref-TH, the brefeldin A biosynthesis cluster contains 4 cytochrome p450 monooxygenases (called orf3 to orf6), as well a the probable cluster-specific transcription regulator orf8. The sequence is that of Cytochrome P450 monooxygenase orf6 from Eupenicillium brefeldianum (Penicillium brefeldianum).